The sequence spans 400 residues: Phosphoglycerate kinase (400 aa).

Substrate-binding positions include 21 to 23 (DFN), R36, 59 to 62 (HCSR), R118, and R151. ATP is bound by residues K201, E323, and 353–356 (GGDT).

This sequence belongs to the phosphoglycerate kinase family. Monomer.

The protein resides in the cytoplasm. The catalysed reaction is (2R)-3-phosphoglycerate + ATP = (2R)-3-phospho-glyceroyl phosphate + ADP. The protein operates within carbohydrate degradation; glycolysis; pyruvate from D-glyceraldehyde 3-phosphate: step 2/5. The polypeptide is Phosphoglycerate kinase (Bartonella bacilliformis (strain ATCC 35685 / KC583 / Herrer 020/F12,63)).